A 330-amino-acid polypeptide reads, in one-letter code: L-lactate dehydrogenase (330 aa).

NAD(+) contacts are provided by residues Val31, Asp52, Lys57, and 96 to 97 (GA). Residues Gln99, Arg105, and 137 to 140 (NPVD) each bind substrate. Residues 135–137 (VSN) and Ser160 contribute to the NAD(+) site. A substrate-binding site is contributed by 165–168 (DTAR). Beta-D-fructose 1,6-bisphosphate is bound by residues Arg170 and His185. His192 (proton acceptor) is an active-site residue. Residue Tyr238 is modified to Phosphotyrosine. Thr247 lines the substrate pocket.

This sequence belongs to the LDH/MDH superfamily. LDH family. As to quaternary structure, homotetramer.

It is found in the cytoplasm. The catalysed reaction is (S)-lactate + NAD(+) = pyruvate + NADH + H(+). Its pathway is fermentation; pyruvate fermentation to lactate; (S)-lactate from pyruvate: step 1/1. Its activity is regulated as follows. Allosterically activated by fructose 1,6-bisphosphate (FBP). Its function is as follows. Catalyzes the conversion of lactate to pyruvate. This Gloeobacter violaceus (strain ATCC 29082 / PCC 7421) protein is L-lactate dehydrogenase.